A 673-amino-acid polypeptide reads, in one-letter code: Acetoacetyl-CoA synthetase (673 aa).

Belongs to the ATP-dependent AMP-binding enzyme family.

It is found in the cytoplasm. It localises to the cytosol. The enzyme catalyses acetoacetate + ATP + CoA = acetoacetyl-CoA + AMP + diphosphate. Converts acetoacetate to acetoacetyl-CoA in the cytosol. Ketone body-utilizing enzyme, responsible for the synthesis of cholesterol and fatty acids. This is Acetoacetyl-CoA synthetase (aacs) from Danio rerio (Zebrafish).